A 748-amino-acid chain; its full sequence is WD repeat-containing protein 91 (748 aa).

Positions 183-228 form a coiled coil; it reads QRTNQVQEENEVLRQKLFALQAEIHRLKKEEQQQEEEAAALVQHKL. Ser257 is modified (phosphoserine). The span at 266–279 shows a compositional bias: low complexity; sequence LLPQSKKSPSRLSP. A disordered region spans residues 266-368; it reads LLPQSKKSPS…PEVSGAEAEP (103 aa). A compositionally biased stretch (polar residues) spans 284–300; the sequence is PQAQSSAKKDSFSSQAT. Phosphoserine occurs at positions 289 and 294. Residues 333 to 344 are compositionally biased toward basic and acidic residues; the sequence is RLQDHGKERREL. Over residues 345-354 the composition is skewed to polar residues; it reads LSTSSSQSQC. 7 WD repeats span residues 407–446, 449–489, 512–556, 561–600, 603–642, 665–703, and 710–748; these read EHHSSIMHCRVDCSGRRVASLDVDGVIKVWSFNPIMQTKA, ISKS…NLCE, VCSA…QQLQ, PEPIAINCTAFNHNGNLLVTGAADGVIRLFDMQQHECAMS, AHCGEVYSVEFSCDENAVYSIGEDRKFIQWNIHKSGLKVS, VQVPRGRLFAFDSEGNYMLTCSATGGLIYKLGSEEKVLE, and GHRAPVVTVDWSTAMDCGTCLTASMDGKIKLTTLLAHKL.

This sequence belongs to the WD repeat WDR91 family. As to quaternary structure, interacts with WDR81; involved in early to late endosome cargo transport. Interacts with BECN1; negatively regulates the PI3 kinase/PI3K activity associated with endosomal membranes.

It localises to the early endosome membrane. The protein resides in the late endosome membrane. Functionally, functions as a negative regulator of the PI3 kinase/PI3K activity associated with endosomal membranes via BECN1, a core subunit of the PI3K complex. By modifying the phosphatidylinositol 3-phosphate/PtdInsP3 content of endosomal membranes may regulate endosome fusion, recycling, sorting and early to late endosome transport. It is for instance, required for the delivery of cargos like BST2/tetherin from early to late endosome and thereby participates indirectly to their degradation by the lysosome. May play a role in meiosis. This is WD repeat-containing protein 91 from Mus musculus (Mouse).